We begin with the raw amino-acid sequence, 570 residues long: Phosphoenolpyruvate-protein phosphotransferase (570 aa).

Residue His-189 is the Tele-phosphohistidine intermediate of the active site. 2 residues coordinate phosphoenolpyruvate: Arg-296 and Arg-332. Mg(2+) is bound by residues Glu-431 and Asp-455. Phosphoenolpyruvate contacts are provided by residues 454-455 and Arg-465; that span reads ND. Cys-502 (proton donor) is an active-site residue.

Belongs to the PEP-utilizing enzyme family. In terms of assembly, homodimer. Mg(2+) serves as cofactor.

It localises to the cytoplasm. It catalyses the reaction L-histidyl-[protein] + phosphoenolpyruvate = N(pros)-phospho-L-histidyl-[protein] + pyruvate. Functionally, general (non sugar-specific) component of the phosphoenolpyruvate-dependent sugar phosphotransferase system (sugar PTS). This major carbohydrate active-transport system catalyzes the phosphorylation of incoming sugar substrates concomitantly with their translocation across the cell membrane. Enzyme I transfers the phosphoryl group from phosphoenolpyruvate (PEP) to the phosphoryl carrier protein (HPr). This is Phosphoenolpyruvate-protein phosphotransferase (ptsI) from Buchnera aphidicola subsp. Schizaphis graminum (strain Sg).